Reading from the N-terminus, the 283-residue chain is Acetyl-coenzyme A carboxylase carboxyl transferase subunit beta (283 aa).

The 255-residue stretch at Leu-29–Tyr-283 folds into the CoA carboxyltransferase N-terminal domain. Cys-33, Cys-36, Cys-51, and Cys-54 together coordinate Zn(2+). The C4-type zinc finger occupies Cys-33–Cys-54.

Belongs to the AccD/PCCB family. In terms of assembly, acetyl-CoA carboxylase is a heterohexamer composed of biotin carboxyl carrier protein (AccB), biotin carboxylase (AccC) and two subunits each of ACCase subunit alpha (AccA) and ACCase subunit beta (AccD). Zn(2+) is required as a cofactor.

The protein localises to the cytoplasm. It catalyses the reaction N(6)-carboxybiotinyl-L-lysyl-[protein] + acetyl-CoA = N(6)-biotinyl-L-lysyl-[protein] + malonyl-CoA. It participates in lipid metabolism; malonyl-CoA biosynthesis; malonyl-CoA from acetyl-CoA: step 1/1. In terms of biological role, component of the acetyl coenzyme A carboxylase (ACC) complex. Biotin carboxylase (BC) catalyzes the carboxylation of biotin on its carrier protein (BCCP) and then the CO(2) group is transferred by the transcarboxylase to acetyl-CoA to form malonyl-CoA. This Latilactobacillus sakei subsp. sakei (strain 23K) (Lactobacillus sakei subsp. sakei) protein is Acetyl-coenzyme A carboxylase carboxyl transferase subunit beta.